The primary structure comprises 623 residues: Putative pentatricopeptide repeat-containing protein At3g11460, mitochondrial (623 aa).

Residues 1–35 (MIVVTSFVRNSAVAAVASTPWNVRLRELAYQSLFS) constitute a mitochondrion transit peptide. PPR repeat units lie at residues 17 to 51 (ASTPWNVRLRELAYQSLFSESISLYRSMLRSGSSP), 52 to 86 (DAFSFPFILKSCASLSLPVSGQQLHCHVTKGGCET), 87 to 117 (EPFVLTALISMYCKCGLVADARKVFEENPQS), 120 to 154 (LSVCYNALISGYTANSKVTDAAYMFRRMKETGVSV), 155 to 189 (DSVTMLGLVPLCTVPEYLWLGRSLHGQCVKGGLDS), 190 to 220 (EVAVLNSFITMYMKCGSVEAGRRLFDEMPVK), 221 to 255 (GLITWNAVISGYSQNGLAYDVLELYEQMKSSGVCP), 256 to 290 (DPFTLVSVLSSCAHLGAKKIGHEVGKLVESNGFVP), 291 to 321 (NVFVSNASISMYARCGNLAKARAVFDIMPVK), 322 to 356 (SLVSWTAMIGCYGMHGMGEIGLMLFDDMIKRGIRP), 357 to 387 (DGAVFVMVLSACSHSGLTDKGLELFRAMKRE), and 393 to 423 (GPEHYSCLVDLLGRAGRLDEAMEFIESMPVE). Positions 428-503 (VWGALLGACK…KPGYSYVEHK (76 aa)) are type E motif. The segment at 504–535 (GRVHLFLAGDRSHEQTEEVHRMLDELETSVME) is type E(+) motif. Residues 536–623 (LAGNMDCDRG…DGVCSCKDYW (88 aa)) are type DYW motif.

This sequence belongs to the PPR family. PCMP-H subfamily. Interacts with MORF8/RIP1.

It localises to the mitochondrion. Functionally, involved in C-to-U editing of mitochondrial RNA. Required specifically for editing the mitochondrial NAD2 transcript. The protein is Putative pentatricopeptide repeat-containing protein At3g11460, mitochondrial (PCMP-H52) of Arabidopsis thaliana (Mouse-ear cress).